We begin with the raw amino-acid sequence, 421 residues long: Peptide chain release factor subunit 1 (421 aa).

The protein belongs to the eukaryotic release factor 1 family. As to quaternary structure, heterodimer of two subunits, one of which binds GTP.

It is found in the cytoplasm. In terms of biological role, directs the termination of nascent peptide synthesis (translation) in response to the termination codons UAA, UAG and UGA. This chain is Peptide chain release factor subunit 1 (prf1), found in Methanocaldococcus jannaschii (strain ATCC 43067 / DSM 2661 / JAL-1 / JCM 10045 / NBRC 100440) (Methanococcus jannaschii).